Here is a 1488-residue protein sequence, read N- to C-terminus: Neuropathy target esterase sws (1488 aa).

The Lumenal segment spans residues 1-34 (MDVLELLRASVNGCYNTLFSDAWSQYVSKQIATT). A helical transmembrane segment spans residues 35–55 (TYWYGALLAIGALFIAWFLYF). The Cytoplasmic segment spans residues 56-1488 (KRLASLRLRD…ENVTEADTKN (1433 aa)). 175–302 (IFGHFEKPIF…IRVIQVIMIR (128 aa)) contributes to the a nucleoside 3',5'-cyclic phosphate binding site. Disordered stretches follow at residues 339-379 (PGPV…DPNP) and 402-440 (QQQQ…ATIT). Composition is skewed to low complexity over residues 344–356 (SQAS…MASR) and 402–413 (QQQQSSGVSVGG). The span at 415-424 (HRSSGACTPT) shows a compositional bias: polar residues. Residues 458 to 587 (ELGL…VVRR) and 576 to 703 (IVLD…LSHR) contribute to the a nucleoside 3',5'-cyclic phosphate site. In terms of domain architecture, PNPLA spans 929–1095 (LVLGGGGARG…VNNLPGHLWR (167 aa)). A GXGXXG motif is present at residues 933 to 938 (GGGARG). The short motif at 960–964 (GVSIG) is the GXSXG element. Ser962 (nucleophile) is an active-site residue. Residue Asp1082 is the Proton acceptor of the active site. The DGA/G motif lies at 1082–1084 (DGG). The residue at position 1176 (Ser1176) is a Phosphoserine. Disordered stretches follow at residues 1348–1376 (RKVD…QGNL) and 1398–1488 (EHKR…DTKN). Residues 1399 to 1410 (HKRRQKSKHKRD) are compositionally biased toward basic residues. The span at 1440-1452 (IDAKLDQLRKLQQ) shows a compositional bias: basic and acidic residues. A compositionally biased stretch (acidic residues) spans 1456 to 1470 (QGNESEQEQEQEQEQ).

The protein belongs to the NTE family. In terms of assembly, interacts with Pka-C3; interaction inhibits the catalytic function of Pka-C3 and the esterase activity of sws.

It is found in the endoplasmic reticulum membrane. It catalyses the reaction a 1-acyl-sn-glycero-3-phosphocholine + H2O = sn-glycerol 3-phosphocholine + a fatty acid + H(+). Functionally, phospholipase B that deacylates intracellular phosphatidylcholine (PtdCho), generating glycerophosphocholine (GroPtdCho). This deacylation occurs at both sn-2 and sn-1 positions of PtdCho. Its specific chemical modification by certain organophosphorus (OP) compounds leads to distal axonopathy. Plays a role in the signaling mechanism between neurons and glia that regulates glia wrapping during development of the adult brain. Essential for membrane lipid homeostasis and cell survival in both neurons and glia of the adult brain. This is Neuropathy target esterase sws from Drosophila mojavensis (Fruit fly).